We begin with the raw amino-acid sequence, 305 residues long: Superkiller complex protein 8 (305 aa).

The residue at position 1 (methionine 1) is an N-acetylmethionine. Threonine 2 is modified (N-acetylthreonine; in WD repeat-containing protein 61, N-terminally processed). 7 WD repeats span residues alanine 14–glutamine 57, glycine 62–serine 101, alanine 104–serine 143, threonine 146–glutamate 187, glycine 188–threonine 227, glycine 230–threonine 269, and aspartate 272–isoleucine 305.

Belongs to the SKI8 family. Component of the PAF1 complex, which consists of CDC73, PAF1, LEO1, CTR9, RTF1 and SKIC8. The PAF1 complex interacts with PHF5A. Within the PAF1 complex interacts directly with PHF5A. Component of the SKI complex which consists of SKIC2, SKIC3 and SKIC8.

It localises to the nucleus. It is found in the cytoplasm. Its function is as follows. Component of the PAF1 complex (PAF1C) which has multiple functions during transcription by RNA polymerase II and is implicated in regulation of development and maintenance of embryonic stem cell pluripotency. PAF1C associates with RNA polymerase II through interaction with POLR2A CTD non-phosphorylated and 'Ser-2'- and 'Ser-5'-phosphorylated forms and is involved in transcriptional elongation, acting both independently and synergistically with TCEA1 and in cooperation with the DSIF complex and HTATSF1. PAF1C is required for transcription of Hox and Wnt target genes. PAF1C is involved in hematopoiesis and stimulates transcriptional activity of KMT2A/MLL1; it promotes leukemogenesis through association with KMT2A/MLL1-rearranged oncoproteins, such as KMT2A/MLL1-MLLT3/AF9 and KMT2A/MLL1-MLLT1/ENL. PAF1C is involved in histone modifications such as ubiquitination of histone H2B and methylation on histone H3 'Lys-4' (H3K4me3). PAF1C recruits the RNF20/40 E3 ubiquitin-protein ligase complex and the E2 enzyme UBE2A or UBE2B to chromatin which mediate monoubiquitination of 'Lys-120' of histone H2B (H2BK120ub1); UB2A/B-mediated H2B ubiquitination is proposed to be coupled to transcription. PAF1C is involved in mRNA 3' end formation probably through association with cleavage and poly(A) factors. In case of infection by influenza A strain H3N2, PAF1C associates with viral NS1 protein, thereby regulating gene transcription. Required for mono- and trimethylation on histone H3 'Lys-4' (H3K4me3), dimethylation on histone H3 'Lys-79' (H3K4me3). Required for Hox gene transcription. Also acts as a component of the SKI complex, a multiprotein complex that assists the RNA-degrading exosome during the mRNA decay and quality-control pathways. The SKI complex catalyzes mRNA extraction from 80S ribosomal complexes in the 3'-5' direction and channels mRNA to the cytosolic exosome for degradation. SKI-mediated extraction of mRNA from stalled ribosomes allow binding of the Pelota-HBS1L complex and subsequent ribosome disassembly by ABCE1 for ribosome recycling. This Mus musculus (Mouse) protein is Superkiller complex protein 8 (Skic8).